The chain runs to 478 residues: Protein nucleotidyltransferase YdiU (478 aa).

ATP contacts are provided by Gly-84, Gly-86, Arg-87, Lys-107, Asp-119, Gly-120, Arg-170, and Arg-177. The active-site Proton acceptor is the Asp-246. Residues Asn-247 and Asp-256 each contribute to the Mg(2+) site. Residue Asp-256 participates in ATP binding.

It belongs to the SELO family. Mg(2+) is required as a cofactor. It depends on Mn(2+) as a cofactor.

It carries out the reaction L-seryl-[protein] + ATP = 3-O-(5'-adenylyl)-L-seryl-[protein] + diphosphate. It catalyses the reaction L-threonyl-[protein] + ATP = 3-O-(5'-adenylyl)-L-threonyl-[protein] + diphosphate. The enzyme catalyses L-tyrosyl-[protein] + ATP = O-(5'-adenylyl)-L-tyrosyl-[protein] + diphosphate. The catalysed reaction is L-histidyl-[protein] + UTP = N(tele)-(5'-uridylyl)-L-histidyl-[protein] + diphosphate. It carries out the reaction L-seryl-[protein] + UTP = O-(5'-uridylyl)-L-seryl-[protein] + diphosphate. It catalyses the reaction L-tyrosyl-[protein] + UTP = O-(5'-uridylyl)-L-tyrosyl-[protein] + diphosphate. Nucleotidyltransferase involved in the post-translational modification of proteins. It can catalyze the addition of adenosine monophosphate (AMP) or uridine monophosphate (UMP) to a protein, resulting in modifications known as AMPylation and UMPylation. This chain is Protein nucleotidyltransferase YdiU, found in Escherichia coli (strain ATCC 8739 / DSM 1576 / NBRC 3972 / NCIMB 8545 / WDCM 00012 / Crooks).